The chain runs to 459 residues: Ribulose bisphosphate carboxylase large chain (459 aa).

K4 is subject to N6,N6,N6-trimethyllysine. N113 and T163 together coordinate substrate. The active-site Proton acceptor is K165. K167 serves as a coordination point for substrate. Positions 191, 193, and 194 each coordinate Mg(2+). At K191 the chain carries N6-carboxylysine. H284 functions as the Proton acceptor in the catalytic mechanism. R285, H317, and S369 together coordinate substrate.

It belongs to the RuBisCO large chain family. Type I subfamily. Heterohexadecamer of 8 large chains and 8 small chains; disulfide-linked. The disulfide link is formed within the large subunit homodimers. The cofactor is Mg(2+). Post-translationally, the disulfide bond which can form in the large chain dimeric partners within the hexadecamer appears to be associated with oxidative stress and protein turnover.

It localises to the plastid. Its subcellular location is the chloroplast. The enzyme catalyses 2 (2R)-3-phosphoglycerate + 2 H(+) = D-ribulose 1,5-bisphosphate + CO2 + H2O. It catalyses the reaction D-ribulose 1,5-bisphosphate + O2 = 2-phosphoglycolate + (2R)-3-phosphoglycerate + 2 H(+). Its function is as follows. RuBisCO catalyzes two reactions: the carboxylation of D-ribulose 1,5-bisphosphate, the primary event in carbon dioxide fixation, as well as the oxidative fragmentation of the pentose substrate in the photorespiration process. Both reactions occur simultaneously and in competition at the same active site. This chain is Ribulose bisphosphate carboxylase large chain, found in Cephalotus follicularis (Albany pitcher plant).